A 1081-amino-acid chain; its full sequence is Disheveled-associated activator of morphogenesis 1-A (1081 aa).

In terms of domain architecture, GBD/FH3 spans 45–418; it reads LPVPPVEELD…QIVIQNEKGQ (374 aa). Disordered regions lie at residues 455–476 and 519–615; these read KEHNELQQKLEKKERECDAKTQ and RTVC…PLKS. Residues 526–536 are compositionally biased toward pro residues; the sequence is PGGPPPPPGAP. Low complexity predominate over residues 538-547; that stretch reads GPMSMPSGNF. A compositionally biased stretch (pro residues) spans 548 to 585; the sequence is MPPPPPPPPPFPGGMAPPPPPPPPPPPPPGGPPPPPGL. Positions 586–600 are enriched in low complexity; that stretch reads PLLGAAPPGAPLGLS. Residues 603 to 1012 form the FH2 domain; sequence KKNIPQPKNP…EERRIRMEAQ (410 aa). Positions 696-705 are actin-binding; sequence AQNCNILLSR. Positions 1013-1029 are enriched in basic and acidic residues; sequence LKEQRERERKARKAKEN. 2 disordered regions span residues 1013-1038 and 1060-1081; these read LKEQRERERKARKAKENGEEEGEFDD and RKRIVSQTTESSRERPVTKLNY. The DAD domain occupies 1030-1061; that stretch reads GEEEGEFDDLVSALRSGEVFDKDLSKLKRNRK. Basic and acidic residues predominate over residues 1070 to 1081; the sequence is SSRERPVTKLNY.

The protein resides in the cytoplasm. Its subcellular location is the cytoskeleton. It is found in the cilium basal body. Its function is as follows. Binds to disheveled (dsh) and Rho, and mediates Wnt-induced dsh-Rho complex formation during gastrulation. May play a role as a scaffolding protein to recruit Rho-GDP and Rho-GEF, thereby enhancing Rho-GTP formation. Can direct nucleation and elongation of new actin filaments. Involved in building functional cilia. Involved in building functional cilia. Involved in the organization of the subapical actin network in multiciliated epithelial cells. The polypeptide is Disheveled-associated activator of morphogenesis 1-A (daam1-a) (Xenopus laevis (African clawed frog)).